We begin with the raw amino-acid sequence, 418 residues long: 3-isopropylmalate dehydratase large subunit 1 (418 aa).

3 residues coordinate [4Fe-4S] cluster: Cys-298, Cys-358, and Cys-361.

It belongs to the aconitase/IPM isomerase family. LeuC type 2 subfamily. Heterodimer of LeuC and LeuD. It depends on [4Fe-4S] cluster as a cofactor.

The catalysed reaction is (2R,3S)-3-isopropylmalate = (2S)-2-isopropylmalate. The protein operates within amino-acid biosynthesis; L-leucine biosynthesis; L-leucine from 3-methyl-2-oxobutanoate: step 2/4. Its function is as follows. Catalyzes the isomerization between 2-isopropylmalate and 3-isopropylmalate, via the formation of 2-isopropylmaleate. The polypeptide is 3-isopropylmalate dehydratase large subunit 1 (Archaeoglobus fulgidus (strain ATCC 49558 / DSM 4304 / JCM 9628 / NBRC 100126 / VC-16)).